A 188-amino-acid polypeptide reads, in one-letter code: Protein K (188 aa).

This chain is Protein K (K), found in Escherichia coli.